A 146-amino-acid polypeptide reads, in one-letter code: Large ribosomal subunit protein uL15 (146 aa).

The segment covering 1 to 13 has biased composition (basic and acidic residues); that stretch reads MKLNELHPSEGSR. The disordered stretch occupies residues 1-56; it reads MKLNELHPSEGSRHARKRVGRGTSSGFGKTSGRGQKGQHARSGGNTRLGFEGGQMP. The span at 23–35 shows a compositional bias: gly residues; sequence TSSGFGKTSGRGQ.

Belongs to the universal ribosomal protein uL15 family. As to quaternary structure, part of the 50S ribosomal subunit.

Functionally, binds to the 23S rRNA. This Lactobacillus delbrueckii subsp. bulgaricus (strain ATCC 11842 / DSM 20081 / BCRC 10696 / JCM 1002 / NBRC 13953 / NCIMB 11778 / NCTC 12712 / WDCM 00102 / Lb 14) protein is Large ribosomal subunit protein uL15.